Consider the following 2454-residue polypeptide: Probable serine/threonine-protein kinase DDB_G0277071 (2454 aa).

Residues Thr-31–Thr-51 show a composition bias toward low complexity. 6 disordered regions span residues Thr-31 to Asn-57, Gln-206 to Asn-265, Pro-340 to Glu-612, Asn-963 to Glu-1051, Ser-1201 to Leu-1330, and Ile-1342 to Thr-1528. A coiled-coil region spans residues Lys-259–Glu-307. Low complexity-rich tracts occupy residues Gln-346–Pro-399 and Pro-406–Ser-428. Residues Ile-429–Gln-444 show a composition bias toward polar residues. 2 stretches are compositionally biased toward low complexity: residues Asn-450 to Asn-461 and Ser-475 to Asn-536. The segment covering Gly-553–Ile-568 has biased composition (gly residues). Composition is skewed to low complexity over residues Asn-963–Asn-1048, Ser-1201–Pro-1248, Asn-1275–Ser-1284, Ser-1299–Gly-1324, and Ser-1346–Thr-1403. Residues Leu-1417–Ile-1441 show a composition bias toward polar residues. Residues Pro-1442 to Ser-1478 show a composition bias toward low complexity. Over residues Thr-1479–Ile-1491 the composition is skewed to polar residues. Low complexity predominate over residues Ser-1509 to Thr-1528. In terms of domain architecture, Protein kinase spans Phe-1730–Ile-2034. Residues Val-1736–Val-1744 and Lys-1760 contribute to the ATP site. Asp-1858 serves as the catalytic Proton acceptor. Positions Arg-2130–Asn-2271 constitute a Tyrosine-protein phosphatase domain. Positions Asn-2379–Asn-2404 are disordered.

The protein belongs to the protein kinase superfamily. Ser/Thr protein kinase family.

It carries out the reaction L-seryl-[protein] + ATP = O-phospho-L-seryl-[protein] + ADP + H(+). It catalyses the reaction L-threonyl-[protein] + ATP = O-phospho-L-threonyl-[protein] + ADP + H(+). The chain is Probable serine/threonine-protein kinase DDB_G0277071 from Dictyostelium discoideum (Social amoeba).